We begin with the raw amino-acid sequence, 311 residues long: NAD kinase (311 aa).

The active-site Proton acceptor is Asp-67. Residues 67-68, Arg-72, 140-141, Arg-151, Asp-170, 181-186, and Gln-240 each bind NAD(+); these read DG, ND, and TAYSLS. The segment covering 278–287 has biased composition (basic and acidic residues); it reads LKEGGSRQDD. Residues 278 to 311 form a disordered region; that stretch reads LKEGGSRQDDENPAATVNPETDSKYPHSHPGSTG.

The protein belongs to the NAD kinase family. It depends on a divalent metal cation as a cofactor.

Its subcellular location is the cytoplasm. The enzyme catalyses NAD(+) + ATP = ADP + NADP(+) + H(+). Involved in the regulation of the intracellular balance of NAD and NADP, and is a key enzyme in the biosynthesis of NADP. Catalyzes specifically the phosphorylation on 2'-hydroxyl of the adenosine moiety of NAD to yield NADP. This chain is NAD kinase, found in Moorella thermoacetica (strain ATCC 39073 / JCM 9320).